Consider the following 251-residue polypeptide: Methionine aminopeptidase (251 aa).

Residue H77 coordinates substrate. A divalent metal cation is bound by residues D94, D105, and H169. H176 serves as a coordination point for substrate. E202 and E233 together coordinate a divalent metal cation.

The protein belongs to the peptidase M24A family. Methionine aminopeptidase type 1 subfamily. In terms of assembly, monomer. The cofactor is Co(2+). Requires Zn(2+) as cofactor. Mn(2+) serves as cofactor. It depends on Fe(2+) as a cofactor.

It carries out the reaction Release of N-terminal amino acids, preferentially methionine, from peptides and arylamides.. Its function is as follows. Removes the N-terminal methionine from nascent proteins. The N-terminal methionine is often cleaved when the second residue in the primary sequence is small and uncharged (Met-Ala-, Cys, Gly, Pro, Ser, Thr, or Val). Requires deformylation of the N(alpha)-formylated initiator methionine before it can be hydrolyzed. In Mycoplasma capricolum subsp. capricolum (strain California kid / ATCC 27343 / NCTC 10154), this protein is Methionine aminopeptidase.